A 407-amino-acid chain; its full sequence is Putative cell wall shaping protein YabE (407 aa).

The signal sequence occupies residues 1-31; the sequence is MKKLFSVKLSKSKVILVAACLLLAGSGTAYA. The G5 domain maps to 206 to 286; that stretch reads ITRIEKVTDV…DKVIAVGTKQ (81 aa).

Functionally, suggested to be involved in cell wall modification. This is Putative cell wall shaping protein YabE (yabE) from Bacillus subtilis (strain 168).